The following is a 644-amino-acid chain: Probable potassium transport system protein Kup (644 aa).

A run of 12 helical transmembrane segments spans residues 10–30, 56–76, 106–126, 143–163, 175–195, 212–232, 252–272, 282–302, 343–363, 371–391, 403–423, and 425–445; these read GGATLPLMAMAALGVVFGDIG, ILSLIFWTLVLVVSVKYAWVI, WWILSIGLLGAALFYGDGVIT, PAWKPLVIPLALGVIIGLFMV, FGPSMLVWFLLLFGSGLTWIV, FFGIHGIGGLVILGAVVLAVT, AWYFLVLPALALNYLGQGALL, PFFMLFPAWATIPMVVISGIA, IYLPLLNWLLMVAVIVVILWF, FAYGTAVTGTMLMTTILVFFV, AGLFCGFFVLLDGVFFGANLL, and FVEGGWFPLAIGLAVFTTMST.

Belongs to the HAK/KUP transporter (TC 2.A.72) family.

It is found in the cell inner membrane. It catalyses the reaction K(+)(in) + H(+)(in) = K(+)(out) + H(+)(out). Transport of potassium into the cell. Likely operates as a K(+):H(+) symporter. The sequence is that of Probable potassium transport system protein Kup from Acidithiobacillus ferrooxidans (strain ATCC 23270 / DSM 14882 / CIP 104768 / NCIMB 8455) (Ferrobacillus ferrooxidans (strain ATCC 23270)).